A 123-amino-acid chain; its full sequence is Altered inheritance of mitochondria protein 4 (123 aa).

Residues 1–16 show a composition bias toward basic and acidic residues; it reads MDQKKDPSNNLTERRV. A disordered region spans residues 1-42; that stretch reads MDQKKDPSNNLTERRVSKVQRPNKKKVRNQVESLSRNLERNK. The span at 17-28 shows a compositional bias: basic residues; it reads SKVQRPNKKKVR.

This sequence belongs to the AIM4 family. As to quaternary structure, may interact with the nuclear pore complex.

The protein resides in the cytoplasm. The sequence is that of Altered inheritance of mitochondria protein 4 (AIM4) from Saccharomyces cerevisiae (strain ATCC 204508 / S288c) (Baker's yeast).